The sequence spans 376 residues: Heme-dependent oxidative N-demethylase gamma subunit (376 aa).

As to quaternary structure, the heme-dependent oxidative N-demethylase (HODM) is a heterotetramer composed of a catalytic alpha subunit, a FMN/2Fe-2S-dependent oxidoreductase beta subunit, a gamma subunit with putative aminotransferase activity, and a delta subunit of unknown function.

Component of the heme-dependent oxidative N-demethylase (HODM) enzyme, that catalyzes the NADPH-dependent oxidation of dimethylamine (DMA) to methylamine (MA) and formaldehyde. Functions in bacterial methylated amine catabolism, linking alkylamine oxidation to the tetrahydrofolate C1 pool. The gamma subunit of HODM may act as an aminomethyltransferase involved in the detoxification of formaldehyde released by the alpha subunit; this process requires tetrahydrofolate (THF). The protein is Heme-dependent oxidative N-demethylase gamma subunit of Ectopseudomonas mendocina (strain ymp) (Pseudomonas mendocina).